A 243-amino-acid polypeptide reads, in one-letter code: NifU-like scaffold protein (243 aa).

It belongs to the NifU family. In terms of assembly, homodimer.

It localises to the plastid. It is found in the apicoplast. It functions in the pathway cofactor biosynthesis; iron-sulfur cluster biosynthesis. Functionally, binds and transfers [4Fe-4S] iron-sulfur clusters to target proteins. In Plasmodium berghei (strain Anka), this protein is NifU-like scaffold protein.